Here is a 678-residue protein sequence, read N- to C-terminus: Exoribonuclease 2 (678 aa).

Positions 193 to 521 (REDLTALPFV…INHRLLKAHI (329 aa)) constitute an RNB domain. Residues 568–650 (ETRFQAEIFD…ENRSLVGKPT (83 aa)) form the S1 motif domain. Residues 658 to 678 (SETQTSTEQPAEGAENNEPQA) are disordered.

Belongs to the RNR ribonuclease family. RNase II subfamily.

It localises to the cytoplasm. The catalysed reaction is Exonucleolytic cleavage in the 3'- to 5'-direction to yield nucleoside 5'-phosphates.. Involved in mRNA degradation. Hydrolyzes single-stranded polyribonucleotides processively in the 3' to 5' direction. The chain is Exoribonuclease 2 from Vibrio cholerae serotype O1 (strain ATCC 39541 / Classical Ogawa 395 / O395).